The following is a 447-amino-acid chain: Phosphoglucosamine mutase (447 aa).

Ser102 (phosphoserine intermediate) is an active-site residue. Positions 102, 241, 243, and 245 each coordinate Mg(2+). Ser102 carries the phosphoserine modification.

Belongs to the phosphohexose mutase family. Requires Mg(2+) as cofactor. In terms of processing, activated by phosphorylation.

The enzyme catalyses alpha-D-glucosamine 1-phosphate = D-glucosamine 6-phosphate. Functionally, catalyzes the conversion of glucosamine-6-phosphate to glucosamine-1-phosphate. In Pseudomonas syringae pv. syringae (strain B728a), this protein is Phosphoglucosamine mutase.